The sequence spans 120 residues: Glycine cleavage system H protein (120 aa).

Positions 17–99 (IATVGITSHA…QGAGWLYRMR (83 aa)) constitute a Lipoyl-binding domain. K58 carries the N6-lipoyllysine modification.

It belongs to the GcvH family. The glycine cleavage system is composed of four proteins: P, T, L and H. The cofactor is (R)-lipoate.

Functionally, the glycine cleavage system catalyzes the degradation of glycine. The H protein shuttles the methylamine group of glycine from the P protein to the T protein. This is Glycine cleavage system H protein from Methylobacterium nodulans (strain LMG 21967 / CNCM I-2342 / ORS 2060).